A 286-amino-acid chain; its full sequence is Bifunctional protein FolD (286 aa).

166-168 (GAS) is a binding site for NADP(+).

It belongs to the tetrahydrofolate dehydrogenase/cyclohydrolase family. In terms of assembly, homodimer.

It catalyses the reaction (6R)-5,10-methylene-5,6,7,8-tetrahydrofolate + NADP(+) = (6R)-5,10-methenyltetrahydrofolate + NADPH. It carries out the reaction (6R)-5,10-methenyltetrahydrofolate + H2O = (6R)-10-formyltetrahydrofolate + H(+). It participates in one-carbon metabolism; tetrahydrofolate interconversion. In terms of biological role, catalyzes the oxidation of 5,10-methylenetetrahydrofolate to 5,10-methenyltetrahydrofolate and then the hydrolysis of 5,10-methenyltetrahydrofolate to 10-formyltetrahydrofolate. This chain is Bifunctional protein FolD, found in Idiomarina loihiensis (strain ATCC BAA-735 / DSM 15497 / L2-TR).